We begin with the raw amino-acid sequence, 116 residues long: uncharacterized protein (116 aa).

Residues 64 to 116 form a disordered region; that stretch reads RRFYSGTVNRNARSAGAASRSTSSVKRPLESKKRNARPETEKWCASYSAGNRR. The segment covering 73-87 has biased composition (low complexity); the sequence is RNARSAGAASRSTSS. Residues 90-105 show a composition bias toward basic and acidic residues; the sequence is RPLESKKRNARPETEK.

This is an uncharacterized protein from Saccharomyces cerevisiae (strain ATCC 204508 / S288c) (Baker's yeast).